We begin with the raw amino-acid sequence, 536 residues long: Adenine deaminase (536 aa).

Residues 1-24 (MTPSPHDLLHCGMNSQDRDETNGD) are disordered.

The protein belongs to the metallo-dependent hydrolases superfamily. Adenine deaminase family. Mn(2+) is required as a cofactor.

It carries out the reaction adenine + H2O + H(+) = hypoxanthine + NH4(+). The chain is Adenine deaminase from Deinococcus radiodurans (strain ATCC 13939 / DSM 20539 / JCM 16871 / CCUG 27074 / LMG 4051 / NBRC 15346 / NCIMB 9279 / VKM B-1422 / R1).